Consider the following 388-residue polypeptide: LIM/homeobox protein Lhx9 (388 aa).

2 LIM zinc-binding domains span residues 69–130 and 131–193; these read ISDR…CHLG and ISAS…LSYT. 3 disordered regions span residues 239–263, 321–356, and 369–388; these read ENEA…RMRT, ENGG…LTDL, and SNMD…TNLF. The segment at residues 267–326 is a DNA-binding region (homeobox); that stretch reads HHQLRTMKSYFAINHNPDAKDLKQLAQKTGLTKRVLQVWFQNARAKFRRNLLRQENGGVD. Low complexity predominate over residues 344 to 356; sequence LTPPGTATTLTDL. Residues 376–388 show a composition bias toward polar residues; it reads SGSPSQTTLTNLF.

Interacts with LDB1 and LDB2.

The protein localises to the nucleus. Its function is as follows. Involved in gonadal development. The chain is LIM/homeobox protein Lhx9 (Lhx9) from Rattus norvegicus (Rat).